The chain runs to 248 residues: Indole-3-glycerol phosphate synthase (248 aa).

Belongs to the TrpC family.

It carries out the reaction 1-(2-carboxyphenylamino)-1-deoxy-D-ribulose 5-phosphate + H(+) = (1S,2R)-1-C-(indol-3-yl)glycerol 3-phosphate + CO2 + H2O. It functions in the pathway amino-acid biosynthesis; L-tryptophan biosynthesis; L-tryptophan from chorismate: step 4/5. The chain is Indole-3-glycerol phosphate synthase from Sulfolobus acidocaldarius (strain ATCC 33909 / DSM 639 / JCM 8929 / NBRC 15157 / NCIMB 11770).